We begin with the raw amino-acid sequence, 251 residues long: 14-3-3-like protein (251 aa).

The protein belongs to the 14-3-3 family. Most abundant in roots and flowers.

In Nicotiana tabacum (Common tobacco), this protein is 14-3-3-like protein.